Reading from the N-terminus, the 921-residue chain is MRRQPAASRDLFAQEPVPPGSGDGALQDALLSLGSVIDVAGLQQAVKEALSAVLPKVETVYTYLLDGESRLVCEEPPHELPQEGKVREAVISRKRLGCNGLGPSDLPGKPLARLVAPLAPDTQVLVIPLVDKEAGAVAAVILVHCGQLSDNEEWSLQAVEKHTLVALKRVQALQQRESSVAPEATQNPPEEAAGDQKGGVAYTNQDRKILQLCGELYDLDASSLQLKVLQYLQQETQASRCCLLLVSEDNLQLSCKVIGDKVLEEEISFPLTTGRLGQVVEDKKSIQLKDLTSEDMQQLQSMLGCEVQAMLCVPVISRATDQVVALACAFNKLGGDLFTDQDEHVIQHCFHYTSTVLTSTLAFQKEQKLKCECQALLQVAKNLFTHLDDVSVLLQEIITEARNLSNAEICSVFLLDQNELVAKVFDGGVVEDESYEIRIPADQGIAGHVATTGQILNIPDAYAHPLFYRGVDDSTGFRTRNILCFPIKNENQEVIGVAELVNKINGPWFSKFDEDLATAFSIYCGISIAHSLLYKKVNEAQYRSHLANEMMMYHMKVSDDEYTKLLHDGIQPVAAIDSNFASFTYTPRSLPEDDTSMAILSMLQDMNFINNYKIDCPTLARFCLMVKKGYRDPPYHNWMHAFSVSHFCYLLYKNLELTNYLEDMEIFALFISCMCHDLDHRGTNNSFQVASKSVLAALYSSEGSVMERHHFAQAIAILNTHGCNIFDHFSRKDYQRMLDLMRDIILATDLAHHLRIFKDLQKMAEVGYDRTNKQHHSLLLCLLMTSCDLSDQTKGWKTTRKIAELIYKEFFSQGDLEKAMGNRPMEMMDREKAYIPELQISFMEHIAMPIYKLLQDLFPKAAELYERVASNREHWTKVSHKFTIRGLPSNNSLDFLDEEYEVPDLDGARAPINGCCSLDAE.

An N-acetylmethionine modification is found at Met1. Disordered stretches follow at residues Met1–Ser21 and Glu177–Gly198. Positions Glu177–Pro188 are enriched in polar residues. 2 GAF domains span residues Asp220–Leu357 and Asp389–Ile528. Residues Ser411, Asp426, Ile445, Tyr468, and Thr479 each contribute to the 3',5'-cyclic GMP site. One can recognise a PDEase domain in the interval Ser558–Phe882. His636 serves as the catalytic Proton donor. Residues His640, His676, Asp677, and Asp788 each contribute to the Zn(2+) site. Asp677 is a Mg(2+) binding site.

This sequence belongs to the cyclic nucleotide phosphodiesterase family. PDE2 subfamily. Homodimer. Zn(2+) serves as cofactor. Requires Mg(2+) as cofactor.

Its subcellular location is the cell membrane. It localises to the cytoplasm. The protein resides in the mitochondrion. The protein localises to the mitochondrion inner membrane. It is found in the mitochondrion outer membrane. The catalysed reaction is a nucleoside 3',5'-cyclic phosphate + H2O = a nucleoside 5'-phosphate + H(+). The enzyme catalyses 3',5'-cyclic GMP + H2O = GMP + H(+). It catalyses the reaction 3',5'-cyclic AMP + H2O = AMP + H(+). With respect to regulation, the 3',5'-cyclic-AMP phosphodiesterase activity is stimulated by 3',5'-cyclic GMP. Functionally, cGMP-activated cyclic nucleotide phosphodiesterase with a dual-specificity for the second messengers cAMP and cGMP, which are key regulators of many important physiological processes. Has a higher efficiency with cGMP compared to cAMP. Plays a role in cell growth and migration. Its function is as follows. Regulates mitochondrial cAMP levels and respiration. Involved in the regulation of mitochondria morphology/dynamics and apoptotic cell death via local modulation of cAMP/PKA signaling in the mitochondrion, including the monitoring of local cAMP levels at the outer mitochondrial membrane and of PKA-dependent phosphorylation of DNM1L. The chain is cGMP-dependent 3',5'-cyclic phosphodiesterase from Bos taurus (Bovine).